A 723-amino-acid polypeptide reads, in one-letter code: Transmembrane channel-like protein 7 (723 aa).

The interval 1–21 (MSESSASALQLGRPSRQPAVH) is disordered. Residues 1-168 (MSESSASALQ…GIQSYFSFLR (168 aa)) are Extracellular-facing. The N-linked (GlcNAc...) asparagine glycan is linked to asparagine 24. The interval 51 to 70 (RRRTTVHSRDKQSGTLLKST) is disordered. Asparagine 84 is a glycosylation site (N-linked (GlcNAc...) asparagine). Serine 89 bears the Phosphoserine mark. Asparagine 96 is a glycosylation site (N-linked (GlcNAc...) asparagine). The chain crosses the membrane as a helical span at residues 169 to 189 (FLVLLNLVIFLIIFMLVLLPI). Residues 190–219 (LLTKYKITNSSFVLIPFKDTDIQCTVYPVS) are Cytoplasmic-facing. A helical membrane pass occupies residues 220–240 (SSGLIYFYSYIIDLLSGTGFL). The Extracellular portion of the chain corresponds to 241 to 263 (EETSLFYGHYTIDGVKFQNFTYD). An N-linked (GlcNAc...) asparagine glycan is attached at asparagine 259. Residues 264 to 284 (LPLAYLISTIAYLALSLLWIV) traverse the membrane as a helical segment. Residues 285-362 (KRSVEGFKIN…EETIRIYSLR (78 aa)) are Cytoplasmic-facing. Residues 363 to 383 (LFLNCIVLAVLGACFYAIYVA) form a helical membrane-spanning segment. Residues 384–404 (TVFSQEHMKKEIDKMVFGENL) are Extracellular-facing. The helical transmembrane segment at 405 to 425 (LILYLPSIVITLANFITPMIF) threads the bilayer. At 426-494 (AKIIRYEDYS…PCWETQVGQE (69 aa)) the chain is on the cytoplasmic side. The chain crosses the membrane as a helical span at residues 495–515 (MYKLMIFDFIIILAVTLFVDF). Residues 516–555 (PRKLLVTYCSSWKLIQCWGQQEFAIPDNVLGIVYGQTICW) are Extracellular-facing. The chain crosses the membrane as a helical span at residues 556–576 (IGAFFSPLLPAIATLKFIIIF). Topologically, residues 577–601 (YVKEWSLLYTCRPSPRPFRASNSNF) are cytoplasmic. A helical membrane pass occupies residues 602-622 (FFLLVLLIGLCLAIIPLTISI). Over 623-665 (SRIPSSKACGPFTNFNTTWEVIPKTVSTFPSSLQSFIHGVTSE) the chain is Extracellular. Residue asparagine 638 is glycosylated (N-linked (GlcNAc...) asparagine). A helical transmembrane segment spans residues 666–686 (AFAVPFFMIICLIMFYFIALA). Over 687–723 (GAHKRVVIQLREQLSLESRDKRYLIQKLTEAQRDTRN) the chain is Cytoplasmic.

It belongs to the TMC family. In terms of assembly, interacts with PIEZO2; the interaction inhibits PIEZO2-conducted mechanically activated currents.

Its subcellular location is the membrane. In terms of biological role, acts as an inhibitory modulator of PIEZO2 mechanosensitive channel in dorsal root ganglion (DRG) neurons through physical interactions or interference with the interaction between Piezo2 and the cytoskeleton. The sequence is that of Transmembrane channel-like protein 7 (TMC7) from Macaca fascicularis (Crab-eating macaque).